Here is a 184-residue protein sequence, read N- to C-terminus: MIKEILKKADEKMGKSIVALKRELASMKAGRANPAMLDRIDAEYYGSMTPLNQLANISVPEARVLLIQPWDKSSMGAIEKAILKSDLGLNPSNDGTVIRLVIPELTEETRKNIVKTVKKTGEETKVAIRSIRRDCNDDVKNLKKDDVSEDDIKKTEDDIQKKTDKYIKEIDSIISAKEKEILSI.

The protein belongs to the RRF family.

The protein localises to the cytoplasm. In terms of biological role, responsible for the release of ribosomes from messenger RNA at the termination of protein biosynthesis. May increase the efficiency of translation by recycling ribosomes from one round of translation to another. This Clostridium botulinum (strain Loch Maree / Type A3) protein is Ribosome-recycling factor.